The sequence spans 220 residues: Protein-L-isoaspartate O-methyltransferase (220 aa).

Ser65 is a catalytic residue.

It belongs to the methyltransferase superfamily. L-isoaspartyl/D-aspartyl protein methyltransferase family.

The protein localises to the cytoplasm. It catalyses the reaction [protein]-L-isoaspartate + S-adenosyl-L-methionine = [protein]-L-isoaspartate alpha-methyl ester + S-adenosyl-L-homocysteine. Its function is as follows. Catalyzes the methyl esterification of L-isoaspartyl residues in peptides and proteins that result from spontaneous decomposition of normal L-aspartyl and L-asparaginyl residues. It plays a role in the repair and/or degradation of damaged proteins. This is Protein-L-isoaspartate O-methyltransferase (pcm) from Pyrococcus horikoshii (strain ATCC 700860 / DSM 12428 / JCM 9974 / NBRC 100139 / OT-3).